Here is a 311-residue protein sequence, read N- to C-terminus: tRNA dimethylallyltransferase (311 aa).

ATP is bound at residue 9–16 (GPTAVGKT). 11 to 16 (TAVGKT) contributes to the substrate binding site. Positions 34–37 (DSMQ) are interaction with substrate tRNA.

The protein belongs to the IPP transferase family. As to quaternary structure, monomer. It depends on Mg(2+) as a cofactor.

The enzyme catalyses adenosine(37) in tRNA + dimethylallyl diphosphate = N(6)-dimethylallyladenosine(37) in tRNA + diphosphate. Functionally, catalyzes the transfer of a dimethylallyl group onto the adenine at position 37 in tRNAs that read codons beginning with uridine, leading to the formation of N6-(dimethylallyl)adenosine (i(6)A). This Clostridium botulinum (strain Okra / Type B1) protein is tRNA dimethylallyltransferase.